Consider the following 205-residue polypeptide: Transcription antitermination protein NusB (205 aa).

It belongs to the NusB family.

Involved in transcription antitermination. Required for transcription of ribosomal RNA (rRNA) genes. Binds specifically to the boxA antiterminator sequence of the ribosomal RNA (rrn) operons. The protein is Transcription antitermination protein NusB of Acaryochloris marina (strain MBIC 11017).